We begin with the raw amino-acid sequence, 1017 residues long: Formin-binding protein 4 (1017 aa).

Disordered stretches follow at residues 1 to 141 (MGKK…STDI) and 160 to 202 (PAAP…TSGW). The residue at position 18 (serine 18) is a Phosphoserine. Residues 40-69 (DSTAAVPSQPAPSAATTTTTAVTAAAASDD) show a composition bias toward low complexity. 2 positions are modified to phosphoserine: serine 116 and serine 124. The span at 130-141 (SKETNGNQSTDI) shows a compositional bias: polar residues. Threonine 172 is subject to Phosphothreonine. Low complexity predominate over residues 181-200 (AATSTLSSSTSNGTDSTQTS). Residues 214–248 (GIEMGDWQEVWDENTGCYYYWNTQTNEVTWELPQY) enclose the WW 1 domain. Lysine 290 bears the N6-acetyllysine mark. Lysine 301 participates in a covalent cross-link: Glycyl lysine isopeptide (Lys-Gly) (interchain with G-Cter in SUMO1). Lysine 335 participates in a covalent cross-link: Glycyl lysine isopeptide (Lys-Gly) (interchain with G-Cter in SUMO2). Lysine 348 is covalently cross-linked (Glycyl lysine isopeptide (Lys-Gly) (interchain with G-Cter in SUMO1); alternate). Lysine 348 is covalently cross-linked (Glycyl lysine isopeptide (Lys-Gly) (interchain with G-Cter in SUMO2); alternate). 4 disordered regions span residues 421–519 (LEEG…TTPK), 621–676 (ESQW…CKES), 706–792 (PLPL…IKRK), and 899–994 (TATI…AERN). Residues serine 427, serine 432, serine 435, serine 438, and serine 442 each carry the phosphoserine modification. The segment covering 428 to 442 (VSGSSPRSDISQPAS) has biased composition (polar residues). Over residues 449–458 (LMSKRGKWKM) the composition is skewed to basic residues. The segment covering 461-474 (RATSPESTSRSSSK) has biased composition (low complexity). Residue serine 464 is modified to Phosphoserine. Residue threonine 479 is modified to Phosphothreonine. The span at 491-513 (NSEKIDENSDKEMEVEESPEKIK) shows a compositional bias: basic and acidic residues. A phosphoserine mark is found at serine 499 and serine 508. Phosphothreonine is present on residues threonine 516 and threonine 517. Lysine 519 is covalently cross-linked (Glycyl lysine isopeptide (Lys-Gly) (interchain with G-Cter in SUMO1); alternate). Lysine 519 is covalently cross-linked (Glycyl lysine isopeptide (Lys-Gly) (interchain with G-Cter in SUMO2); alternate). The WW 2 domain maps to 595–629 (NATPKGWSCHWDRDHRRYFYVNEQSGESQWEFPDG). A compositionally biased stretch (acidic residues) spans 627–637 (PDGEEEEEESQ). Over residues 640-656 (ENRDETLAKQTLKDKTG) the composition is skewed to basic and acidic residues. Positions 657-671 (TDSNSTESSETSTGS) are enriched in low complexity. Residues 706 to 732 (PLPLEMPPPPPPPPESPPPPPPPPPPA) show a composition bias toward pro residues. The span at 733-748 (EDGEIQEVEMEDEGSE) shows a compositional bias: acidic residues. A compositionally biased stretch (low complexity) spans 764-786 (SAQTTVVTSQSSVDSTISSSSST). Over residues 904–925 (EPPPPPPPPPPPPPPAPKMPPP) the composition is skewed to pro residues. Residues 929 to 941 (KKGRKDKAKKSKT) show a composition bias toward basic residues. Positions 957 to 970 (LDEEDNSSSSEEDR) are enriched in acidic residues. 3 positions are modified to phosphoserine: serine 963, serine 964, and serine 965. Over residues 971 to 982 (ESTAQKRIEEWK) the composition is skewed to basic and acidic residues.

In terms of assembly, binds FMN1. Interacts with the Arg/Gly-rich-flanked Pro-rich of KHDRBS1/SAM68. Arginine methylation in these regions has no effect on this binding. In terms of tissue distribution, highly expressed in the eye.

The sequence is that of Formin-binding protein 4 (FNBP4) from Homo sapiens (Human).